The primary structure comprises 619 residues: Chaperone protein HscA homolog (619 aa).

The protein belongs to the heat shock protein 70 family.

In terms of biological role, chaperone involved in the maturation of iron-sulfur cluster-containing proteins. Has a low intrinsic ATPase activity which is markedly stimulated by HscB. This is Chaperone protein HscA homolog from Methylococcus capsulatus (strain ATCC 33009 / NCIMB 11132 / Bath).